The sequence spans 117 residues: MKLTMVLSVAFATLTFANEGILTFEGLGLARRQTICHTPGGSGCRASISGDQCCCTSCTPEDCSDLCKNGKQAAHEAQKQKKCAKCCNAGGESHELCCSIASAGIDCNPCTAGLRMC.

The signal sequence occupies residues 1–17 (MKLTMVLSVAFATLTFA). Intrachain disulfides connect C36–C87, C44–C55, C53–C58, C54–C98, C63–C83, C67–C117, C86–C97, and C107–C110. The tract at residues 87–117 (CNAGGESHELCCSIASAGIDCNPCTAGLRMC) is chitin-binding domain.

In terms of assembly, interacts with host cell wall-associated kinase receptor Snn1.

It localises to the secreted. Functionally, necrotrophic effector that plays a critical role during fungal penetration, via its interaction with the host Snn1 protein. Snn1 is a member of the wall-associated kinase class of receptors, which are known to drive pathways for biotrophic pathogen resistance. Recognition of Tox1 by Snn1 induces mitogen-activated protein kinase genes such as MAPK3 and activates programmed cell death, which allows this necrotroph to gain nutrients and sporulate. Recognition of Tox1 by Snn1 also induces other plant defense responses, including oxidative burst and pathogenesis related (PR) gene expression. The development of necrosis and disease induced by Tox1, and particularly penetration during infection, requires light, which is probably related to the light-dependent expression of host Snn1. Tox1 plays an additional role in providing significant protection from wheat chitinases by binding chitin in the fungal cell wall. This chain is Cysteine rich necrotrophic effector Tox1, found in Phaeosphaeria nodorum (strain SN15 / ATCC MYA-4574 / FGSC 10173) (Glume blotch fungus).